The sequence spans 111 residues: Translation initiation factor 1A 1 (111 aa).

Residues Met-1–Thr-26 form a disordered region. The S1-like domain maps to Thr-22–Thr-96.

This sequence belongs to the eIF-1A family.

Seems to be required for maximal rate of protein biosynthesis. Enhances ribosome dissociation into subunits and stabilizes the binding of the initiator Met-tRNA(I) to 40 S ribosomal subunits. In Methanosarcina acetivorans (strain ATCC 35395 / DSM 2834 / JCM 12185 / C2A), this protein is Translation initiation factor 1A 1 (eIF1A1).